We begin with the raw amino-acid sequence, 161 residues long: 2-C-methyl-D-erythritol 2,4-cyclodiphosphate synthase (161 aa).

Residues Asp-11 and His-13 each coordinate a divalent metal cation. 4-CDP-2-C-methyl-D-erythritol 2-phosphate contacts are provided by residues 11–13 (DIH) and 37–38 (HS). His-45 is a binding site for a divalent metal cation. Residues 59–61 (DIG), 135–138 (TTNE), and Arg-145 each bind 4-CDP-2-C-methyl-D-erythritol 2-phosphate.

Belongs to the IspF family. In terms of assembly, homotrimer. Requires a divalent metal cation as cofactor.

It catalyses the reaction 4-CDP-2-C-methyl-D-erythritol 2-phosphate = 2-C-methyl-D-erythritol 2,4-cyclic diphosphate + CMP. The protein operates within isoprenoid biosynthesis; isopentenyl diphosphate biosynthesis via DXP pathway; isopentenyl diphosphate from 1-deoxy-D-xylulose 5-phosphate: step 4/6. In terms of biological role, involved in the biosynthesis of isopentenyl diphosphate (IPP) and dimethylallyl diphosphate (DMAPP), two major building blocks of isoprenoid compounds. Catalyzes the conversion of 4-diphosphocytidyl-2-C-methyl-D-erythritol 2-phosphate (CDP-ME2P) to 2-C-methyl-D-erythritol 2,4-cyclodiphosphate (ME-CPP) with a corresponding release of cytidine 5-monophosphate (CMP). This Cyanothece sp. (strain PCC 7425 / ATCC 29141) protein is 2-C-methyl-D-erythritol 2,4-cyclodiphosphate synthase.